Consider the following 325-residue polypeptide: Beta-1,3-galactosyltransferase 6 (325 aa).

Over 1 to 11 (MKVFRRAWRHR) the chain is Cytoplasmic. A helical; Signal-anchor for type II membrane protein transmembrane segment spans residues 12–30 (VALGLGGLAFCGTTLLYLA). The Lumenal segment spans residues 31–325 (RCASEGETPS…QCCQRKEGVP (295 aa)). Residue Asn-127 is glycosylated (N-linked (GlcNAc...) asparagine).

Belongs to the glycosyltransferase 31 family. The cofactor is Mn(2+).

It is found in the golgi apparatus. The protein resides in the golgi stack membrane. It catalyses the reaction 3-O-(beta-D-galactosyl-(1-&gt;4)-beta-D-xylosyl)-L-seryl-[protein] + UDP-alpha-D-galactose = 3-O-(beta-D-galactosyl-(1-&gt;3)-beta-D-galactosyl-(1-&gt;4)-beta-D-xylosyl)-L-seryl-[protein] + UDP + H(+). The protein operates within glycan metabolism; chondroitin sulfate biosynthesis. It participates in glycan metabolism; heparan sulfate biosynthesis. In terms of biological role, beta-1,3-galactosyltransferase that transfers galactose from UDP-galactose to substrates with a terminal beta-linked galactose residue. Has a preference for galactose-beta-1,4-xylose that is found in the linker region of glycosaminoglycans, such as heparan sulfate and chondroitin sulfate. Has no activity towards substrates with terminal glucosamine or galactosamine residues. This is Beta-1,3-galactosyltransferase 6 (B3galt6) from Mus musculus (Mouse).